A 551-amino-acid chain; its full sequence is HTH-type transcriptional regulator SgrR (551 aa).

The region spanning 1–116 (MPSARLQQQF…LVSHLGRSFR (116 aa)) is the HTH marR-type domain. The H-T-H motif DNA-binding region spans 26-49 (LNELAALLSCSRRHMRTLLNTMQD). A solute-binding region spans residues 163–492 (ELEADIAHHW…IDWQADAARW (330 aa)).

Its function is as follows. Activates the small RNA gene sgrS under glucose-phosphate stress conditions as well as yfdZ. Represses its own transcription under both stress and non-stress conditions. Might act as a sensor of the intracellular accumulation of phosphoglucose by binding these molecules in its C-terminal solute-binding domain. The sequence is that of HTH-type transcriptional regulator SgrR from Shigella flexneri serotype 5b (strain 8401).